We begin with the raw amino-acid sequence, 328 residues long: Beta-ketoacyl-[acyl-carrier-protein] synthase III (328 aa).

Active-site residues include Cys-122 and His-255. Residues 256–260 are ACP-binding; it reads QANIR. Residue Asn-285 is part of the active site.

Belongs to the thiolase-like superfamily. FabH family. Homodimer.

Its subcellular location is the cytoplasm. The enzyme catalyses malonyl-[ACP] + acetyl-CoA + H(+) = 3-oxobutanoyl-[ACP] + CO2 + CoA. Its pathway is lipid metabolism; fatty acid biosynthesis. Its function is as follows. Catalyzes the condensation reaction of fatty acid synthesis by the addition to an acyl acceptor of two carbons from malonyl-ACP. Catalyzes the first condensation reaction which initiates fatty acid synthesis and may therefore play a role in governing the total rate of fatty acid production. Possesses both acetoacetyl-ACP synthase and acetyl transacylase activities. Its substrate specificity determines the biosynthesis of branched-chain and/or straight-chain of fatty acids. This Herminiimonas arsenicoxydans protein is Beta-ketoacyl-[acyl-carrier-protein] synthase III.